The following is a 211-amino-acid chain: Thiamine-phosphate synthase (211 aa).

4-amino-2-methyl-5-(diphosphooxymethyl)pyrimidine is bound by residues 37-41 (QLREK) and Asn69. 2 residues coordinate Mg(2+): Asp70 and Glu89. Ser108 is a 4-amino-2-methyl-5-(diphosphooxymethyl)pyrimidine binding site. 134–136 (TTT) contributes to the 2-[(2R,5Z)-2-carboxy-4-methylthiazol-5(2H)-ylidene]ethyl phosphate binding site. Residue Lys137 participates in 4-amino-2-methyl-5-(diphosphooxymethyl)pyrimidine binding. Residues Gly163 and 183-184 (VS) each bind 2-[(2R,5Z)-2-carboxy-4-methylthiazol-5(2H)-ylidene]ethyl phosphate.

The protein belongs to the thiamine-phosphate synthase family. It depends on Mg(2+) as a cofactor.

The enzyme catalyses 2-[(2R,5Z)-2-carboxy-4-methylthiazol-5(2H)-ylidene]ethyl phosphate + 4-amino-2-methyl-5-(diphosphooxymethyl)pyrimidine + 2 H(+) = thiamine phosphate + CO2 + diphosphate. The catalysed reaction is 2-(2-carboxy-4-methylthiazol-5-yl)ethyl phosphate + 4-amino-2-methyl-5-(diphosphooxymethyl)pyrimidine + 2 H(+) = thiamine phosphate + CO2 + diphosphate. It carries out the reaction 4-methyl-5-(2-phosphooxyethyl)-thiazole + 4-amino-2-methyl-5-(diphosphooxymethyl)pyrimidine + H(+) = thiamine phosphate + diphosphate. Its pathway is cofactor biosynthesis; thiamine diphosphate biosynthesis; thiamine phosphate from 4-amino-2-methyl-5-diphosphomethylpyrimidine and 4-methyl-5-(2-phosphoethyl)-thiazole: step 1/1. Functionally, condenses 4-methyl-5-(beta-hydroxyethyl)thiazole monophosphate (THZ-P) and 2-methyl-4-amino-5-hydroxymethyl pyrimidine pyrophosphate (HMP-PP) to form thiamine monophosphate (TMP). This is Thiamine-phosphate synthase from Enterococcus faecalis (strain ATCC 700802 / V583).